Consider the following 428-residue polypeptide: Elongation factor 1-alpha (428 aa).

Residues Lys-5 to Thr-225 enclose the tr-type G domain. Residues Gly-14 to Ser-21 are G1. Gly-14–Ser-21 contributes to the GTP binding site. Mg(2+) is bound at residue Ser-21. The interval Gly-70–Asp-74 is G2. The tract at residues Asp-91–Gly-94 is G3. Residues Asp-91–His-95 and Asn-149–Asp-152 each bind GTP. The interval Asn-149 to Asp-152 is G4. A G5 region spans residues Ala-189–Leu-191.

Belongs to the TRAFAC class translation factor GTPase superfamily. Classic translation factor GTPase family. EF-Tu/EF-1A subfamily.

Its subcellular location is the cytoplasm. The catalysed reaction is GTP + H2O = GDP + phosphate + H(+). GTP hydrolase that promotes the GTP-dependent binding of aminoacyl-tRNA to the A-site of ribosomes during protein biosynthesis. The polypeptide is Elongation factor 1-alpha (Methanococcus maripaludis (strain C6 / ATCC BAA-1332)).